The following is a 401-amino-acid chain: Adaptive-response sensory kinase SasA (401 aa).

The Histidine kinase domain occupies 175–400 (MLVHDLRNPL…WFHFTLPVYP (226 aa)). His-178 carries the phosphohistidine; by autocatalysis modification.

In terms of assembly, homooligomerizes. Interacts with KaiC. Participates in the KaiABC clock complex, whose core is composed of a KaiC homohexamer, 6 KaiB and up to 6 KaiA dimers. SasA and KaiB(fs) compete to bind to KaiC.

It carries out the reaction ATP + protein L-histidine = ADP + protein N-phospho-L-histidine.. Member of the two-component regulatory system SasA/RpaA involved in genome-wide circadian gene expression. One of several clock output pathways. Participates in the Kai clock protein complex, the main circadian regulator in cyanobacteria, via its interaction with KaiC. KaiC enhances the autophosphorylation activity of SasA, which then transfers its phosphate group to RpaA to activate it. In addition to its output function, recruits fold-shifted KaiB (KaiB(fs)) to KaiC to cooperatively form the KaiB(6):KaiC(6) complex (independent of SasA kinase activity). Required for robustness of the circadian rhythm of gene expression and is involved in clock output, also required for adaptation to light/dark cycles. The chain is Adaptive-response sensory kinase SasA from Trichormus variabilis (strain ATCC 29413 / PCC 7937) (Anabaena variabilis).